A 900-amino-acid polypeptide reads, in one-letter code: Alanine--tRNA ligase (900 aa).

Zn(2+)-binding residues include H604, H608, C708, and H712.

This sequence belongs to the class-II aminoacyl-tRNA synthetase family. Zn(2+) is required as a cofactor.

It is found in the cytoplasm. The enzyme catalyses tRNA(Ala) + L-alanine + ATP = L-alanyl-tRNA(Ala) + AMP + diphosphate. Functionally, catalyzes the attachment of alanine to tRNA(Ala) in a two-step reaction: alanine is first activated by ATP to form Ala-AMP and then transferred to the acceptor end of tRNA(Ala). Also edits incorrectly charged Ser-tRNA(Ala) and Gly-tRNA(Ala) via its editing domain. In Saccharolobus islandicus (strain L.S.2.15 / Lassen #1) (Sulfolobus islandicus), this protein is Alanine--tRNA ligase.